The following is a 196-amino-acid chain: Imidazole glycerol phosphate synthase subunit HisH (196 aa).

Residues 2–196 (KIIIINTNCS…EQLIKNFLEI (195 aa)) form the Glutamine amidotransferase type-1 domain. Catalysis depends on cysteine 77, which acts as the Nucleophile. Active-site residues include histidine 178 and glutamate 180.

Heterodimer of HisH and HisF.

The protein resides in the cytoplasm. The catalysed reaction is 5-[(5-phospho-1-deoxy-D-ribulos-1-ylimino)methylamino]-1-(5-phospho-beta-D-ribosyl)imidazole-4-carboxamide + L-glutamine = D-erythro-1-(imidazol-4-yl)glycerol 3-phosphate + 5-amino-1-(5-phospho-beta-D-ribosyl)imidazole-4-carboxamide + L-glutamate + H(+). It catalyses the reaction L-glutamine + H2O = L-glutamate + NH4(+). It participates in amino-acid biosynthesis; L-histidine biosynthesis; L-histidine from 5-phospho-alpha-D-ribose 1-diphosphate: step 5/9. IGPS catalyzes the conversion of PRFAR and glutamine to IGP, AICAR and glutamate. The HisH subunit catalyzes the hydrolysis of glutamine to glutamate and ammonia as part of the synthesis of IGP and AICAR. The resulting ammonia molecule is channeled to the active site of HisF. In Blochmanniella floridana, this protein is Imidazole glycerol phosphate synthase subunit HisH.